The primary structure comprises 1071 residues: Ubiquitin carboxyl-terminal hydrolase 7 (1071 aa).

A disordered region spans residues 467-532; sequence KARLQQEQQQ…MPTTPEIPPP (66 aa). Over residues 471–480 the composition is skewed to low complexity; it reads QQEQQQQQQQ. Over residues 481-495 the composition is skewed to polar residues; the sequence is PDSQDSFSAKESSTK. Composition is skewed to pro residues over residues 497–507 and 516–532; these read PEPPSWKPPDL and PPPP…IPPP. The region spanning 609–1069 is the USP domain; that stretch reads TGLRNLGNTC…DVYVLFYERV (461 aa). Cysteine 618 acts as the Nucleophile in catalysis. Positions 913–942 are disordered; the sequence is RMLGGSGKRSSSSTPFSTGGNDSNNSSDYK. Over residues 920–932 the composition is skewed to polar residues; the sequence is KRSSSSTPFSTGG. Histidine 1014 (proton acceptor) is an active-site residue.

Belongs to the peptidase C19 family.

Its subcellular location is the cytoplasm. It catalyses the reaction Thiol-dependent hydrolysis of ester, thioester, amide, peptide and isopeptide bonds formed by the C-terminal Gly of ubiquitin (a 76-residue protein attached to proteins as an intracellular targeting signal).. Functionally, involved in the sorting of ubiquitinated cargo proteins at the multivesicular body (MVB). This chain is Ubiquitin carboxyl-terminal hydrolase 7 (UBP7), found in Saccharomyces cerevisiae (strain ATCC 204508 / S288c) (Baker's yeast).